Here is a 246-residue protein sequence, read N- to C-terminus: MIVIPAIDLKNGHCVRLRQGRMDDETIFDADPVAVAGRWVEAGAERLHLVDLDGAVRGEPAHEQTIHAIARAYPDTPLQIGGGIRSRETALRYLEAGVGYVIVGTRAVREPAFVEELCREIPGRVCVGLDARGGYVATDGWEQTSEVAAVDLARRFEDAGVAALIFTDIGRDGMMQGCNVEATRELARAVSIPVIASGGVSSLEDVRSLAGSPEGIAGAIVGRAIYDGGLDLATAIRTAQEVGDDR.

Asp8 acts as the Proton acceptor in catalysis. Asp130 serves as the catalytic Proton donor.

The protein belongs to the HisA/HisF family.

It localises to the cytoplasm. It catalyses the reaction 1-(5-phospho-beta-D-ribosyl)-5-[(5-phospho-beta-D-ribosylamino)methylideneamino]imidazole-4-carboxamide = 5-[(5-phospho-1-deoxy-D-ribulos-1-ylimino)methylamino]-1-(5-phospho-beta-D-ribosyl)imidazole-4-carboxamide. Its pathway is amino-acid biosynthesis; L-histidine biosynthesis; L-histidine from 5-phospho-alpha-D-ribose 1-diphosphate: step 4/9. The chain is 1-(5-phosphoribosyl)-5-[(5-phosphoribosylamino)methylideneamino] imidazole-4-carboxamide isomerase from Halorhodospira halophila (strain DSM 244 / SL1) (Ectothiorhodospira halophila (strain DSM 244 / SL1)).